The sequence spans 333 residues: MTTVTVTTEVPSSGKTEDGHVFCDSSSAHIIEETEYVRQMRTTLEKIRNHMFKEKEGCGNARHKLDAEGSGNIQNGSDSTTDPTCLDLLMENMRRKDQQLLEMNRENEVLQIKLEASREAGAAALRNVAQRLFDNYQTQAGDLEKKHEGRKHLLQVNNLEKEQALKGSAESLNLLSEKLEEKHGQIVGLENRVQRMENEKKTLLEKKLRLESKLFQLKSNAANPKSCQDLQTEISILQEQISHLQFVIHSQHQNLRSIIQEMEGLKNTLKEQDTKIENLKEKVTVLEAQNKELKTRVAHWTETPRTLVSKAVSTSELKTEGASPYLMLIRLRK.

Coiled coils occupy residues 86-120 and 160-302; these read LDLLMENMRRKDQQLLEMNRENEVLQIKLEASREA and EKEQ…HWTE.

Interacts with CEP170.

It is found in the cytoplasm. Its subcellular location is the cytoskeleton. The protein localises to the microtubule organizing center. The protein resides in the centrosome. It localises to the centriole. Centriolar protein required for centriole subdistal appendage assembly and microtubule anchoring in interphase cells. Together with CCDC120, cooperate with subdistal appendage components ODF2, NIN and CEP170 for hierarchical subdistal appendage assembly. This Mus musculus (Mouse) protein is Coiled-coil domain-containing protein 68 (Ccdc68).